Consider the following 82-residue polypeptide: Large ribosomal subunit protein uL23 (82 aa).

Belongs to the universal ribosomal protein uL23 family. As to quaternary structure, part of the 50S ribosomal subunit. Contacts protein L29.

Binds to 23S rRNA. One of the proteins that surrounds the polypeptide exit tunnel on the outside of the ribosome. In Natronomonas pharaonis (strain ATCC 35678 / DSM 2160 / CIP 103997 / JCM 8858 / NBRC 14720 / NCIMB 2260 / Gabara) (Halobacterium pharaonis), this protein is Large ribosomal subunit protein uL23.